A 309-amino-acid chain; its full sequence is NADH-cytochrome b5 reductase 1 (309 aa).

The chain crosses the membrane as a helical span at residues 31–51 (DWVVYSVALALALGTWKFFQL). Residues 60-168 (TKFQEFELKE…RGPKGAFVYQ (109 aa)) form the FAD-binding FR-type domain. Residues 148 to 163 (AGLS…GPKG) and 174 to 208 (HFGM…QVDL) each bind FAD.

Belongs to the flavoprotein pyridine nucleotide cytochrome reductase family. In terms of assembly, monomer. Component of the 2-(3-amino-3-carboxypropyl)histidine synthase complex composed of DPH1, DPH2, DPH3 and a NADH-dependent reductase, predominantly CBR1. FAD is required as a cofactor.

The protein localises to the mitochondrion outer membrane. The catalysed reaction is 2 Fe(III)-[cytochrome b5] + NADH = 2 Fe(II)-[cytochrome b5] + NAD(+) + H(+). It catalyses the reaction 2 Fe(3+)-[Dph3] + NADH = 2 Fe(2+)-[Dph3] + NAD(+) + H(+). It participates in protein modification; peptidyl-diphthamide biosynthesis. NADH-dependent reductase for DPH3 and cytochrome b5. Required for the first step of diphthamide biosynthesis, a post-translational modification of histidine which occurs in elongation factor 2. DPH1 and DPH2 transfer a 3-amino-3-carboxypropyl (ACP) group from S-adenosyl-L-methionine (SAM) to a histidine residue, the reaction is assisted by a reduction system comprising DPH3 and a NADH-dependent reductase, predominantly CBR1. By reducing DPH3, also involved in the formation of the tRNA wobble base modification mcm5s 2U (5-methoxycarbonylmethyl-2-thiouridine), mediated by the elongator complex. The cytochrome b5/NADH cytochrome b5 reductase electron transfer system supports the catalytic activity of several sterol biosynthetic enzymes. This is NADH-cytochrome b5 reductase 1 (CBR1) from Pyricularia oryzae (strain 70-15 / ATCC MYA-4617 / FGSC 8958) (Rice blast fungus).